The primary structure comprises 278 residues: Sulfur carrier protein FdhD (278 aa).

Residue Cys-120 is the Cysteine persulfide intermediate of the active site.

This sequence belongs to the FdhD family.

Its subcellular location is the cytoplasm. Its function is as follows. Required for formate dehydrogenase (FDH) activity. Acts as a sulfur carrier protein that transfers sulfur from IscS to the molybdenum cofactor prior to its insertion into FDH. The chain is Sulfur carrier protein FdhD from Bordetella petrii (strain ATCC BAA-461 / DSM 12804 / CCUG 43448).